The chain runs to 558 residues: uncharacterized protein (558 aa).

A disordered region spans residues 396–420; that stretch reads SSITDNDTDNDSGATESQQTDSEND. The span at 407–416 shows a compositional bias: polar residues; the sequence is SGATESQQTD.

Belongs to the chlamydial CPn_0065/CT_288/TC_0561 family.

This is an uncharacterized protein from Chlamydia muridarum (strain MoPn / Nigg).